The primary structure comprises 286 residues: Bifunctional protein FolD (286 aa).

NADP(+) is bound by residues 170-172 (GHS) and Ile236.

This sequence belongs to the tetrahydrofolate dehydrogenase/cyclohydrolase family. Homodimer.

It catalyses the reaction (6R)-5,10-methylene-5,6,7,8-tetrahydrofolate + NADP(+) = (6R)-5,10-methenyltetrahydrofolate + NADPH. The catalysed reaction is (6R)-5,10-methenyltetrahydrofolate + H2O = (6R)-10-formyltetrahydrofolate + H(+). Its pathway is one-carbon metabolism; tetrahydrofolate interconversion. Catalyzes the oxidation of 5,10-methylenetetrahydrofolate to 5,10-methenyltetrahydrofolate and then the hydrolysis of 5,10-methenyltetrahydrofolate to 10-formyltetrahydrofolate. This Methanococcoides burtonii (strain DSM 6242 / NBRC 107633 / OCM 468 / ACE-M) protein is Bifunctional protein FolD.